The chain runs to 151 residues: Transcription antitermination protein NusB (151 aa).

Belongs to the NusB family.

Its function is as follows. Involved in transcription antitermination. Required for transcription of ribosomal RNA (rRNA) genes. Binds specifically to the boxA antiterminator sequence of the ribosomal RNA (rrn) operons. The protein is Transcription antitermination protein NusB of Thermus thermophilus (strain ATCC BAA-163 / DSM 7039 / HB27).